The chain runs to 101 residues: Urease subunit gamma (101 aa).

This sequence belongs to the urease gamma subunit family. In terms of assembly, heterotrimer of UreA (gamma), UreB (beta) and UreC (alpha) subunits. Three heterotrimers associate to form the active enzyme.

The protein localises to the cytoplasm. It catalyses the reaction urea + 2 H2O + H(+) = hydrogencarbonate + 2 NH4(+). Its pathway is nitrogen metabolism; urea degradation; CO(2) and NH(3) from urea (urease route): step 1/1. This chain is Urease subunit gamma, found in Geobacillus kaustophilus (strain HTA426).